Consider the following 358-residue polypeptide: Homoserine O-acetyltransferase (358 aa).

One can recognise an AB hydrolase-1 domain in the interval 52–337 (NVILICHALT…DEPYGHDAFL (286 aa)). The Nucleophile role is filled by serine 148. Residue arginine 217 coordinates substrate. Residues aspartate 304 and histidine 333 contribute to the active site. Aspartate 334 contacts substrate.

Belongs to the AB hydrolase superfamily. MetX family. In terms of assembly, homodimer.

Its subcellular location is the cytoplasm. It carries out the reaction L-homoserine + acetyl-CoA = O-acetyl-L-homoserine + CoA. The protein operates within amino-acid biosynthesis; L-methionine biosynthesis via de novo pathway; O-acetyl-L-homoserine from L-homoserine: step 1/1. Functionally, transfers an acetyl group from acetyl-CoA to L-homoserine, forming acetyl-L-homoserine. The chain is Homoserine O-acetyltransferase from Chlorobium luteolum (strain DSM 273 / BCRC 81028 / 2530) (Pelodictyon luteolum).